The following is a 198-amino-acid chain: Carnitine operon protein CaiE (198 aa).

The interval 179–198 is disordered; sequence VEENRPRLKGTTDVKPKSAQ. Residues 180 to 198 show a composition bias toward basic and acidic residues; that stretch reads EENRPRLKGTTDVKPKSAQ.

The protein belongs to the transferase hexapeptide repeat family.

It participates in amine and polyamine metabolism; carnitine metabolism. Overproduction of CaiE stimulates the activity of CaiB and CaiD. The polypeptide is Carnitine operon protein CaiE (Salmonella agona (strain SL483)).